The chain runs to 368 residues: Protein RecA (368 aa).

72-79 (GNESSGKT) lines the ATP pocket.

The protein belongs to the RecA family.

Its subcellular location is the cytoplasm. Can catalyze the hydrolysis of ATP in the presence of single-stranded DNA, the ATP-dependent uptake of single-stranded DNA by duplex DNA, and the ATP-dependent hybridization of homologous single-stranded DNAs. It interacts with LexA causing its activation and leading to its autocatalytic cleavage. This is Protein RecA from Petrotoga mobilis (strain DSM 10674 / SJ95).